The chain runs to 407 residues: Argininosuccinate synthase (407 aa).

Residues 10 to 18 and A37 contribute to the ATP site; that span reads AYSGGLDTS. L-citrulline is bound by residues Y90 and S95. G120 contributes to the ATP binding site. T122, N126, and D127 together coordinate L-aspartate. N126 is a binding site for L-citrulline. R130, S181, S190, E266, and Y278 together coordinate L-citrulline.

It belongs to the argininosuccinate synthase family. Type 1 subfamily. In terms of assembly, homotetramer.

It is found in the cytoplasm. It carries out the reaction L-citrulline + L-aspartate + ATP = 2-(N(omega)-L-arginino)succinate + AMP + diphosphate + H(+). It functions in the pathway amino-acid biosynthesis; L-arginine biosynthesis; L-arginine from L-ornithine and carbamoyl phosphate: step 2/3. The protein is Argininosuccinate synthase of Ruegeria sp. (strain TM1040) (Silicibacter sp.).